The chain runs to 482 residues: Phenylalanine--tRNA ligase alpha subunit (482 aa).

L-phenylalanine contacts are provided by residues threonine 327, 366–368, and tyrosine 406; that span reads QIE. Mg(2+) is bound at residue glutamate 408. Phenylalanine 430 is an L-phenylalanine binding site.

It belongs to the class-II aminoacyl-tRNA synthetase family. Phe-tRNA synthetase alpha subunit type 2 subfamily. Tetramer of two alpha and two beta subunits. The cofactor is Mg(2+).

Its subcellular location is the cytoplasm. It carries out the reaction tRNA(Phe) + L-phenylalanine + ATP = L-phenylalanyl-tRNA(Phe) + AMP + diphosphate + H(+). The polypeptide is Phenylalanine--tRNA ligase alpha subunit (Thermoplasma volcanium (strain ATCC 51530 / DSM 4299 / JCM 9571 / NBRC 15438 / GSS1)).